A 135-amino-acid polypeptide reads, in one-letter code: Histone H3 (135 aa).

A disordered region spans residues 1 to 40 (MARTKQTARKSTGGKAPRKAVATKARKTAPPVGGVKKPHR). Residues 19 to 31 (KAVATKARKTAPP) show a composition bias toward low complexity.

Belongs to the histone H3 family. As to quaternary structure, the nucleosome is a histone octamer containing two molecules each of H2A, H2B, H3 and H4 assembled in one H3-H4 heterotetramer and two H2A-H2B heterodimers. The octamer wraps approximately 147 bp of DNA.

It localises to the nucleus. The protein resides in the chromosome. Its function is as follows. Core component of nucleosome. Nucleosomes wrap and compact DNA into chromatin, limiting DNA accessibility to the cellular machineries which require DNA as a template. Histones thereby play a central role in transcription regulation, DNA repair, DNA replication and chromosomal stability. DNA accessibility is regulated via a complex set of post-translational modifications of histones, also called histone code, and nucleosome remodeling. The chain is Histone H3 from Mastigamoeba balamuthi (Phreatamoeba balamuthi).